A 383-amino-acid chain; its full sequence is Heme chaperone HemW (383 aa).

The Radical SAM core domain maps to 1-241; the sequence is MPKLPPLSLY…LTMAGYQQYE (241 aa). Tyr10 lines the S-adenosyl-L-methionine pocket. [4Fe-4S] cluster contacts are provided by Cys16, Cys20, and Cys23. S-adenosyl-L-methionine is bound by residues Gly70, 71-72, Glu103, Gln130, Arg142, and Asp167; that span reads GT.

The protein belongs to the anaerobic coproporphyrinogen-III oxidase family. HemW subfamily. The cofactor is [4Fe-4S] cluster.

The protein resides in the cytoplasm. Its function is as follows. Probably acts as a heme chaperone, transferring heme to an unknown acceptor. Binds one molecule of heme per monomer, possibly covalently. Binds 1 [4Fe-4S] cluster. The cluster is coordinated with 3 cysteines and an exchangeable S-adenosyl-L-methionine. This is Heme chaperone HemW from Haemophilus influenzae (strain ATCC 51907 / DSM 11121 / KW20 / Rd).